The primary structure comprises 537 residues: Berberine bridge enzyme-like 26 (537 aa).

Residues 1-27 form the signal peptide; it reads MGISKPLPLFSILVLYFSLYTITPTSS. Cysteines 38 and 102 form a disulfide. N-linked (GlcNAc...) asparagine glycosylation occurs at Asn-59. Residues 80-256 form the FAD-binding PCMH-type domain; the sequence is SMPKPGFIFS…LAWKIKLVPV (177 aa). Residues 117-181 constitute a cross-link (6-(S-cysteinyl)-8alpha-(pros-histidyl)-FAD (His-Cys)); it reads HDYEGLSYVS…KVHGFPAGLC (65 aa). A glycan (N-linked (GlcNAc...) asparagine) is linked at Asn-306.

It belongs to the oxygen-dependent FAD-linked oxidoreductase family. Requires FAD as cofactor. The FAD cofactor is bound via a bicovalent 6-S-cysteinyl, 8alpha-N1-histidyl FAD linkage.

The protein localises to the secreted. It localises to the cell wall. The sequence is that of Berberine bridge enzyme-like 26 from Arabidopsis thaliana (Mouse-ear cress).